The chain runs to 391 residues: 23S rRNA (uracil(747)-C(5))-methyltransferase RlmC (391 aa).

[4Fe-4S] cluster contacts are provided by Cys5, Cys13, Cys16, and Cys95. 4 residues coordinate S-adenosyl-L-methionine: Gln220, Phe249, Glu276, and Asn322. The active-site Nucleophile is Cys349.

It belongs to the class I-like SAM-binding methyltransferase superfamily. RNA M5U methyltransferase family. RlmC subfamily.

It carries out the reaction uridine(747) in 23S rRNA + S-adenosyl-L-methionine = 5-methyluridine(747) in 23S rRNA + S-adenosyl-L-homocysteine + H(+). In terms of biological role, catalyzes the formation of 5-methyl-uridine at position 747 (m5U747) in 23S rRNA. The chain is 23S rRNA (uracil(747)-C(5))-methyltransferase RlmC from Actinobacillus pleuropneumoniae serotype 3 (strain JL03).